A 207-amino-acid polypeptide reads, in one-letter code: Ribosomal RNA large subunit methyltransferase E (207 aa).

S-adenosyl-L-methionine is bound by residues glycine 60, tryptophan 62, aspartate 80, aspartate 96, and aspartate 121. The Proton acceptor role is filled by lysine 161.

This sequence belongs to the class I-like SAM-binding methyltransferase superfamily. RNA methyltransferase RlmE family.

The protein localises to the cytoplasm. The catalysed reaction is uridine(2552) in 23S rRNA + S-adenosyl-L-methionine = 2'-O-methyluridine(2552) in 23S rRNA + S-adenosyl-L-homocysteine + H(+). In terms of biological role, specifically methylates the uridine in position 2552 of 23S rRNA at the 2'-O position of the ribose in the fully assembled 50S ribosomal subunit. This Pseudomonas aeruginosa (strain UCBPP-PA14) protein is Ribosomal RNA large subunit methyltransferase E.